Here is a 1088-residue protein sequence, read N- to C-terminus: DNA polymerase II large subunit (1088 aa).

Belongs to the archaeal DNA polymerase II family. In terms of assembly, heterodimer of a large subunit and a small subunit.

It carries out the reaction DNA(n) + a 2'-deoxyribonucleoside 5'-triphosphate = DNA(n+1) + diphosphate. The enzyme catalyses Exonucleolytic cleavage in the 3'- to 5'-direction to yield nucleoside 5'-phosphates.. Its function is as follows. Possesses two activities: a DNA synthesis (polymerase) and an exonucleolytic activity that degrades single-stranded DNA in the 3'- to 5'-direction. Has a template-primer preference which is characteristic of a replicative DNA polymerase. The protein is DNA polymerase II large subunit (polC) of Thermoplasma volcanium (strain ATCC 51530 / DSM 4299 / JCM 9571 / NBRC 15438 / GSS1).